A 227-amino-acid chain; its full sequence is PKHD-type hydroxylase Reut_B4660 (227 aa).

One can recognise a Fe2OG dioxygenase domain in the interval 78 to 178 (KVFPPLFNRY…RVSSFFWIQS (101 aa)). Fe cation-binding residues include His96, Asp98, and His159. Residue Arg169 participates in 2-oxoglutarate binding.

Fe(2+) is required as a cofactor. Requires L-ascorbate as cofactor.

The sequence is that of PKHD-type hydroxylase Reut_B4660 from Cupriavidus pinatubonensis (strain JMP 134 / LMG 1197) (Cupriavidus necator (strain JMP 134)).